We begin with the raw amino-acid sequence, 844 residues long: DNA mismatch repair protein MutS (844 aa).

Residue 602-609 (GPNMSGKS) coordinates ATP.

The protein belongs to the DNA mismatch repair MutS family.

In terms of biological role, this protein is involved in the repair of mismatches in DNA. It is possible that it carries out the mismatch recognition step. This protein has a weak ATPase activity. This Streptococcus pneumoniae serotype 19F (strain G54) protein is DNA mismatch repair protein MutS.